We begin with the raw amino-acid sequence, 363 residues long: DNA replication and repair protein RecF (363 aa).

30–37 lines the ATP pocket; the sequence is GPNGSGKT.

It belongs to the RecF family.

Its subcellular location is the cytoplasm. Functionally, the RecF protein is involved in DNA metabolism; it is required for DNA replication and normal SOS inducibility. RecF binds preferentially to single-stranded, linear DNA. It also seems to bind ATP. This is DNA replication and repair protein RecF from Vibrio cholerae serotype O1 (strain ATCC 39541 / Classical Ogawa 395 / O395).